Here is a 177-residue protein sequence, read N- to C-terminus: ATP synthase subunit delta (177 aa).

This sequence belongs to the ATPase delta chain family. F-type ATPases have 2 components, F(1) - the catalytic core - and F(0) - the membrane proton channel. F(1) has five subunits: alpha(3), beta(3), gamma(1), delta(1), epsilon(1). F(0) has three main subunits: a(1), b(2) and c(10-14). The alpha and beta chains form an alternating ring which encloses part of the gamma chain. F(1) is attached to F(0) by a central stalk formed by the gamma and epsilon chains, while a peripheral stalk is formed by the delta and b chains.

Its subcellular location is the cell inner membrane. Its function is as follows. F(1)F(0) ATP synthase produces ATP from ADP in the presence of a proton or sodium gradient. F-type ATPases consist of two structural domains, F(1) containing the extramembraneous catalytic core and F(0) containing the membrane proton channel, linked together by a central stalk and a peripheral stalk. During catalysis, ATP synthesis in the catalytic domain of F(1) is coupled via a rotary mechanism of the central stalk subunits to proton translocation. This protein is part of the stalk that links CF(0) to CF(1). It either transmits conformational changes from CF(0) to CF(1) or is implicated in proton conduction. The sequence is that of ATP synthase subunit delta from Janthinobacterium sp. (strain Marseille) (Minibacterium massiliensis).